We begin with the raw amino-acid sequence, 256 residues long: Biosynthetic peptidoglycan transglycosylase (256 aa).

Residues 26-48 (VARWLAYVGGVFAGAWLATQLYY) form a helical membrane-spanning segment.

This sequence belongs to the glycosyltransferase 51 family.

It localises to the cell inner membrane. The enzyme catalyses [GlcNAc-(1-&gt;4)-Mur2Ac(oyl-L-Ala-gamma-D-Glu-L-Lys-D-Ala-D-Ala)](n)-di-trans,octa-cis-undecaprenyl diphosphate + beta-D-GlcNAc-(1-&gt;4)-Mur2Ac(oyl-L-Ala-gamma-D-Glu-L-Lys-D-Ala-D-Ala)-di-trans,octa-cis-undecaprenyl diphosphate = [GlcNAc-(1-&gt;4)-Mur2Ac(oyl-L-Ala-gamma-D-Glu-L-Lys-D-Ala-D-Ala)](n+1)-di-trans,octa-cis-undecaprenyl diphosphate + di-trans,octa-cis-undecaprenyl diphosphate + H(+). It participates in cell wall biogenesis; peptidoglycan biosynthesis. Its function is as follows. Peptidoglycan polymerase that catalyzes glycan chain elongation from lipid-linked precursors. The protein is Biosynthetic peptidoglycan transglycosylase of Burkholderia pseudomallei (strain K96243).